Here is a 526-residue protein sequence, read N- to C-terminus: Microphthalmia-associated transcription factor (526 aa).

Residues 20–54 (EPKTYYELKSQPLKSSSSAEHSGASKPPLSSSTMT) are disordered. Residues 34-44 (SSSSAEHSGAS) show a composition bias toward low complexity. Residue serine 180 is modified to Phosphoserine; by MAPK. Lysine 289 participates in a covalent cross-link: Glycyl lysine isopeptide (Lys-Gly) (interchain with G-Cter in SUMO). The bHLH domain occupies 311 to 364 (QKKDNHNLIERRRRFNINDRIKELGTLIPKSNDPDMRWNKGTILKASVDYIRKL). Positions 355 to 401 (KASVDYIRKLQREQQRAKDLENRQKKLEHANRHLLLRVQELEMQARA) form a coiled coil. The interval 374–395 (LENRQKKLEHANRHLLLRVQEL) is leucine-zipper. Serine 405 carries the phosphoserine; by GSK3 modification. Position 414 is a phosphoserine (serine 414). Lysine 423 is covalently cross-linked (Glycyl lysine isopeptide (Lys-Gly) (interchain with G-Cter in SUMO)). Phosphoserine is present on serine 491. Residues 496 to 526 (TDPLLSSVSPGASKTSSRRSSMSAEETEHAC) form a disordered region. Residues 507–519 (ASKTSSRRSSMSA) show a composition bias toward low complexity. Serine 516 carries the post-translational modification Phosphoserine; by RPS6KA1.

This sequence belongs to the MiT/TFE family. In terms of assembly, homodimer or heterodimer; dimerization is mediated via the coiled coil region. Efficient DNA binding requires dimerization with another bHLH protein. Binds DNA in the form of homodimer or heterodimer with either TFE3, TFEB or TFEC. Identified in a complex with HINT1 and CTNNB1. Interacts with KARS1. Interacts with VSX2. Phosphorylation at Ser-405 significantly enhances the ability to bind the tyrosinase promoter. Phosphorylated at Ser-180 and Ser-516 following KIT signaling, triggering a short live activation: Phosphorylation at Ser-180 and Ser-516 by MAPK and RPS6KA1, respectively, activate the transcription factor activity but also promote ubiquitination and subsequent degradation by the proteasome. Phosphorylated in response to blue light (415nm). Post-translationally, ubiquitinated following phosphorylation at Ser-180, leading to subsequent degradation by the proteasome. Deubiquitinated by USP13, preventing its degradation.

Its subcellular location is the nucleus. It is found in the cytoplasm. Transcription factor that regulates the expression of genes with essential roles in cell differentiation, proliferation and survival. Binds to M-boxes (5'-TCATGTG-3') and symmetrical DNA sequences (E-boxes) (5'-CACGTG-3') found in the promoters of target genes, such as BCL2 and tyrosinase (TYR). Plays an important role in melanocyte development by regulating the expression of tyrosinase (TYR) and tyrosinase-related protein 1 (TYRP1). Plays a critical role in the differentiation of various cell types, such as neural crest-derived melanocytes, mast cells, osteoclasts and optic cup-derived retinal pigment epithelium. The sequence is that of Microphthalmia-associated transcription factor (Mitf) from Rattus norvegicus (Rat).